The primary structure comprises 403 residues: Na(+)-translocating NADH-quinone reductase subunit B (403 aa).

9 helical membrane-spanning segments follow: residues 56–76, 121–141, 163–183, 220–240, 265–285, 287–307, 312–332, 348–368, and 371–391; these read MMITVWLCTFPAMFFGMWNTG, AYFLPVYAVTFIVGGFWEVLF, ILPPSIPLWQVALGISFGVVI, WTAVDGFAGATSLSLAASGGI, TSTLAIAIGGLVLLITKIASW, IVSGVMLGMIGLSLLLNLIGS, MFAMPWYWHLVVGGFAFGMFF, WIFGALIGVMVVLIRVVNPAF, and GMMLAILFANLFAPLIDHFVV. FMN phosphoryl threonine is present on threonine 230.

The protein belongs to the NqrB/RnfD family. As to quaternary structure, composed of six subunits; NqrA, NqrB, NqrC, NqrD, NqrE and NqrF. The cofactor is FMN.

It localises to the cell inner membrane. It catalyses the reaction a ubiquinone + n Na(+)(in) + NADH + H(+) = a ubiquinol + n Na(+)(out) + NAD(+). Its function is as follows. NQR complex catalyzes the reduction of ubiquinone-1 to ubiquinol by two successive reactions, coupled with the transport of Na(+) ions from the cytoplasm to the periplasm. NqrA to NqrE are probably involved in the second step, the conversion of ubisemiquinone to ubiquinol. This chain is Na(+)-translocating NADH-quinone reductase subunit B, found in Ectopseudomonas mendocina (strain ymp) (Pseudomonas mendocina).